The primary structure comprises 219 residues: Transmembrane protein 125 (219 aa).

A run of 4 helical transmembrane segments spans residues 36–56 (LCFV…VALL), 68–88 (LATG…QLMS), 114–134 (ALVV…LAGL), and 147–167 (MLSV…GLLL).

It localises to the membrane. The protein is Transmembrane protein 125 (TMEM125) of Homo sapiens (Human).